The primary structure comprises 234 residues: MSKRYWNIDLEEMMEARVHLGHKTRKWNPKMAPYIFTERKDTHIINLAKTARSLSEACDLVFDIAGRGKQFLIVGTKYQATDLVASAATEARCHYVNRKWLGGMLTNWSTTETRLQKFKDLKKEQDTGRFNQLPKKEAAMLKRQLDQLQKYLGGIRYMRSLPDIAIITNQREESIALGECRTLGIPTICLVDTDCDPDLVDIPIPANDDGIASIQLILNRLTSAICEGRALRSL.

This sequence belongs to the universal ribosomal protein uS2 family.

It localises to the plastid. The protein resides in the chloroplast. The protein is Small ribosomal subunit protein uS2c (rps2) of Pinus koraiensis (Korean pine).